A 713-amino-acid polypeptide reads, in one-letter code: Acetyl-coenzyme A synthetase 1 (713 aa).

Positions 1–39 (MSPSAVQSSKLEEQSSEIDKLKAKMSQSAATAQQKKEHE) are disordered. Positions 10 to 22 (KLEEQSSEIDKLK) are enriched in basic and acidic residues. CoA-binding positions include 248 to 251 (RGGK) and Thr-367. ATP-binding positions include 443–445 (GEP), 467–472 (DTYWQT), Asp-559, and Arg-574. Positions 552–600 (PGYYFTGDGAAKDKDGYIWILGRVDDVVNVSGHRLSTAEIEAAIIEDPI) match the FACS motif. Ser-582 provides a ligand contact to CoA. Position 585 (Arg-585) interacts with ATP. A CoA-binding site is contributed by Arg-650. A Microbody targeting signal motif is present at residues 711-713 (VKL).

The protein belongs to the ATP-dependent AMP-binding enzyme family.

The protein localises to the microsome. The protein resides in the cytoplasm. Its subcellular location is the mitochondrion. It is found in the nucleus. It catalyses the reaction acetate + ATP + CoA = acetyl-CoA + AMP + diphosphate. Its function is as follows. Catalyzes the production of acetyl-CoA. Provides the acetyl-CoA source for histone acetylation in the nucleus. 'Aerobic' isozyme of acetyl-coenzyme A synthetase, which supports growth on nonfermentable carbon sources such as glycerol and ethanol. May be required for assimilation of ethanol and acetate. In Saccharomyces cerevisiae (strain ATCC 204508 / S288c) (Baker's yeast), this protein is Acetyl-coenzyme A synthetase 1 (ACS1).